The following is a 251-amino-acid chain: Segregation and condensation protein A (251 aa).

It belongs to the ScpA family. Component of a cohesin-like complex composed of ScpA, ScpB and the Smc homodimer, in which ScpA and ScpB bind to the head domain of Smc. The presence of the three proteins is required for the association of the complex with DNA.

The protein localises to the cytoplasm. In terms of biological role, participates in chromosomal partition during cell division. May act via the formation of a condensin-like complex containing Smc and ScpB that pull DNA away from mid-cell into both cell halves. The protein is Segregation and condensation protein A of Clostridium botulinum (strain Eklund 17B / Type B).